The sequence spans 290 residues: Arylamine N-acetyltransferase 2 (290 aa).

C68 acts as the Acyl-thioester intermediate in catalysis. Positions 103 and 104 each coordinate CoA. Residue 106-107 coordinates substrate; the sequence is IH. Active-site residues include H107 and D122. The CoA site is built by Y208, T214, and S287.

Belongs to the arylamine N-acetyltransferase family.

It is found in the cytoplasm. The catalysed reaction is an arylamine + acetyl-CoA = an N-acetylarylamine + CoA. It carries out the reaction an N-hydroxyarylamine + acetyl-CoA = an N-acetoxyarylamine + CoA. Functionally, catalyzes the N- or O-acetylation of various arylamine and heterocyclic amine substrates, and participates in the detoxification of a plethora of hydrazine and arylamine drugs. This is Arylamine N-acetyltransferase 2 (NAT2) from Macaca mulatta (Rhesus macaque).